Reading from the N-terminus, the 620-residue chain is 1-deoxy-D-xylulose-5-phosphate synthase (620 aa).

Residues histidine 80 and 121–123 contribute to the thiamine diphosphate site; that span reads GHS. Aspartate 152 is a binding site for Mg(2+). Residues 153–154, asparagine 181, tyrosine 288, and glutamate 370 each bind thiamine diphosphate; that span reads GA. Asparagine 181 provides a ligand contact to Mg(2+).

It belongs to the transketolase family. DXPS subfamily. In terms of assembly, homodimer. It depends on Mg(2+) as a cofactor. Thiamine diphosphate serves as cofactor.

It catalyses the reaction D-glyceraldehyde 3-phosphate + pyruvate + H(+) = 1-deoxy-D-xylulose 5-phosphate + CO2. It participates in metabolic intermediate biosynthesis; 1-deoxy-D-xylulose 5-phosphate biosynthesis; 1-deoxy-D-xylulose 5-phosphate from D-glyceraldehyde 3-phosphate and pyruvate: step 1/1. Its function is as follows. Catalyzes the acyloin condensation reaction between C atoms 2 and 3 of pyruvate and glyceraldehyde 3-phosphate to yield 1-deoxy-D-xylulose-5-phosphate (DXP). The protein is 1-deoxy-D-xylulose-5-phosphate synthase of Salmonella heidelberg (strain SL476).